We begin with the raw amino-acid sequence, 178 residues long: Ribosome maturation factor RimM (178 aa).

In terms of domain architecture, PRC barrel spans 100-178 (DEGEFYWHQL…EIRVDWDADF (79 aa)).

It belongs to the RimM family. In terms of assembly, binds ribosomal protein uS19.

It localises to the cytoplasm. Functionally, an accessory protein needed during the final step in the assembly of 30S ribosomal subunit, possibly for assembly of the head region. Essential for efficient processing of 16S rRNA. May be needed both before and after RbfA during the maturation of 16S rRNA. It has affinity for free ribosomal 30S subunits but not for 70S ribosomes. The polypeptide is Ribosome maturation factor RimM (Azotobacter vinelandii (strain DJ / ATCC BAA-1303)).